A 666-amino-acid polypeptide reads, in one-letter code: Non-receptor tyrosine-protein kinase TNK1 (666 aa).

Serine 96 carries the post-translational modification Phosphoserine. Residues valine 116 to leucine 383 form the Protein kinase domain. ATP contacts are provided by residues leucine 122 to valine 130 and lysine 148. Catalysis depends on aspartate 245, which acts as the Proton acceptor. Serine 255 is modified (phosphoserine). Residues alanine 381 to leucine 441 form the SH3 domain. A disordered region spans residues glycine 442–proline 589. Basic and acidic residues predominate over residues histidine 457–threonine 473. Serine 498 is subject to Phosphoserine. Threonine 510 carries the phosphothreonine modification. At serine 515 the chain carries Phosphoserine. Positions aspartate 531–proline 544 are enriched in pro residues. Serine 582 is modified (phosphoserine).

The protein belongs to the protein kinase superfamily. Tyr protein kinase family. As to quaternary structure, interacts with the SH3 domain of PLCG1 via its Pro-rich domain. In terms of processing, autophosphorylated on tyrosine residues. In terms of tissue distribution, expressed in whole embryo and all adult tissues examined including liver, kidney, heart, brain, skeletal muscle and intestine. Also detected in various myeloid- and lymphoid-derived cell lines.

The protein resides in the membrane. Its subcellular location is the cytoplasm. It carries out the reaction L-tyrosyl-[protein] + ATP = O-phospho-L-tyrosyl-[protein] + ADP + H(+). Its function is as follows. May function in signaling pathways utilized broadly during fetal development and more selectively in adult tissues and in cells of the lymphohematopoietic system. Could specifically be involved in phospholipid signal transduction. Involved in negative regulation of cell growth. Has tumor suppressor properties. Plays a negative regulatory role in the Ras-MAPK pathway. This is Non-receptor tyrosine-protein kinase TNK1 from Mus musculus (Mouse).